Here is a 95-residue protein sequence, read N- to C-terminus: Large ribosomal subunit protein uL23 (95 aa).

The protein belongs to the universal ribosomal protein uL23 family. As to quaternary structure, part of the 50S ribosomal subunit. Contacts protein L29, and trigger factor when it is bound to the ribosome.

In terms of biological role, one of the early assembly proteins it binds 23S rRNA. One of the proteins that surrounds the polypeptide exit tunnel on the outside of the ribosome. Forms the main docking site for trigger factor binding to the ribosome. The chain is Large ribosomal subunit protein uL23 from Desulfatibacillum aliphaticivorans.